The primary structure comprises 1413 residues: GTPase-activating protein and VPS9 domain-containing protein 1 (1413 aa).

A Ras-GAP domain is found at 147–385; sequence SYLLQVLRYL…AAFLDVVIGG (239 aa). S227 carries the post-translational modification Phosphoserine. 2 positions are modified to phosphothreonine: T390 and T458. Disordered regions lie at residues 448–474, 540–587, 718–799, and 826–852; these read KPGK…PANK, LSDG…GSNG, ESCS…PPSQ, and HYAR…ARLP. Polar residues predominate over residues 451–467; sequence KSSSLEMTPYSTPQLSP. Position 460 is a phosphotyrosine (Y460). The residue at position 466 (S466) is a Phosphoserine. T470 bears the Phosphothreonine mark. Phosphoserine is present on residues S721, S725, and S736. Over residues 737–756 the composition is skewed to polar residues; the sequence is SRPSTPGLSVVSGISATSED. A Phosphothreonine modification is found at T741. S745 carries the phosphoserine modification. The segment covering 757–768 has biased composition (basic and acidic residues); it reads IPNKIEDLRSEC. S856, S882, S883, S888, S894, S946, S972, and S999 each carry phosphoserine. Over residues 871–882 the composition is skewed to basic and acidic residues; that stretch reads HSYPERLVRSRS. The tract at residues 871-957 is disordered; it reads HSYPERLVRS…DEKSDRNRPW (87 aa). Residues 883-897 show a composition bias toward low complexity; sequence SDVVSSVRRPMSDPS. A compositionally biased stretch (basic and acidic residues) spans 934 to 955; it reads DSSRGETEERKDSDDEKSDRNR. Positions 1011–1049 are disordered; sequence VMGDGESAHDSPRDETLQNISADDLPDSASQAAHPQDSA. Positions 1016 to 1026 are enriched in basic and acidic residues; that stretch reads ESAHDSPRDET. Phosphoserine occurs at positions 1031 and 1038. The 141-residue stretch at 1273–1413 folds into the VPS9 domain; sequence ILRDQVLHEH…EFIKTIDDRK (141 aa).

The protein belongs to the GAPVD1 family. Interacts with TRIP10/CIP4. Interacts with RAB5A.

The protein resides in the membrane. It localises to the endosome. Acts both as a GTPase-activating protein (GAP) and a guanine nucleotide exchange factor (GEF), and participates in various processes such as endocytosis, insulin receptor internalization or LC2A4/GLUT4 trafficking. Acts as a GEF for the Ras-related protein RAB31 by exchanging bound GDP for free GTP, leading to regulate LC2A4/GLUT4 trafficking. In the absence of insulin, it maintains RAB31 in an active state and promotes a futile cycle between LC2A4/GLUT4 storage vesicles and early endosomes, retaining LC2A4/GLUT4 inside the cells. Upon insulin stimulation, it is translocated to the plasma membrane, releasing LC2A4/GLUT4 from intracellular storage vesicles. Also involved in EGFR trafficking and degradation, possibly by promoting EGFR ubiquitination and subsequent degradation by the proteasome. Has GEF activity for Rab5 and GAP activity for Ras. The sequence is that of GTPase-activating protein and VPS9 domain-containing protein 1 (GAPVD1) from Bos taurus (Bovine).